Here is a 254-residue protein sequence, read N- to C-terminus: Caffeoyl-CoA O-methyltransferase (254 aa).

A disordered region spans residues 1–25 (MATTNVEENKQTQEQQPKEIKHQEV). Over residues 7 to 25 (EENKQTQEQQPKEIKHQEV) the composition is skewed to basic and acidic residues. Lysine 28 is a substrate binding site. S-adenosyl-L-methionine is bound by residues threonine 70, glutamate 92, 94-95 (GV), serine 100, aspartate 118, and alanine 147. Aspartate 170 serves as a coordination point for substrate. Aspartate 170 is a binding site for a divalent metal cation. Aspartate 172 is an S-adenosyl-L-methionine binding site. A divalent metal cation is bound by residues aspartate 196 and asparagine 197. Asparagine 201 serves as a coordination point for substrate.

It belongs to the class I-like SAM-binding methyltransferase superfamily. Cation-dependent O-methyltransferase family. CCoAMT subfamily. The cofactor is a divalent metal cation.

The enzyme catalyses (E)-caffeoyl-CoA + S-adenosyl-L-methionine = (E)-feruloyl-CoA + S-adenosyl-L-homocysteine + H(+). The protein operates within aromatic compound metabolism; phenylpropanoid biosynthesis. In terms of biological role, methylates caffeoyl-CoA to feruloyl-CoA and 5-hydroxyferuloyl-CoA to sinapoyl-CoA. Plays a role in the synthesis of feruloylated polysaccharides. Involved in the reinforcement of the plant cell wall. Also involved in the responding to wounding or pathogen challenge by the increased formation of cell wall-bound ferulic acid polymers. In Mesembryanthemum crystallinum (Common ice plant), this protein is Caffeoyl-CoA O-methyltransferase.